We begin with the raw amino-acid sequence, 56 residues long: Pituitary adenylate cyclase-activating polypeptide (56 aa).

The tract at residues 42–50 (VKKYLAAVL) is important for receptor binding. Leucine amide is present on leucine 50.

This sequence belongs to the glucagon family. Interacts with ADCYAP1R1 (via N-terminal extracellular domain).

The protein resides in the secreted. PACAP is a neuropeptide involved in diverse array of physiological processes through activating the PACAP subfamily of class B1 G protein-coupled receptors: VIP receptor 1 (VIPR1), VIP receptor 2 (VIPR2), and PACAP type I receptor (ADCYAP1R1). Exerts neuroprotective and general cytoprotective effects due to anti-apoptotic, anti-inflammatory, and antioxidant actions. The sequence is that of Pituitary adenylate cyclase-activating polypeptide (Adcyap1) from Heloderma suspectum (Gila monster).